Consider the following 446-residue polypeptide: Xylose isomerase 2 (446 aa).

Catalysis depends on residues H109 and D112. Residues E240, E276, H279, D304, D315, D317, and D347 each coordinate Mg(2+).

Belongs to the xylose isomerase family. Homotetramer. Mg(2+) serves as cofactor.

It localises to the cytoplasm. It catalyses the reaction alpha-D-xylose = alpha-D-xylulofuranose. The protein is Xylose isomerase 2 of Xanthomonas campestris pv. campestris (strain 8004).